Here is a 236-residue protein sequence, read N- to C-terminus: Translocon-associated protein subunit alpha (236 aa).

The first 20 residues, 1–20 (MNKLITLLLAVLMIISCVYS), serve as a signal peptide directing secretion. Over 21–163 (DDVEITDDEV…TEKETSFDMD (143 aa)) the chain is Lumenal. Residues asparagine 74, asparagine 94, asparagine 141, asparagine 148, and asparagine 152 are each glycosylated (N-linked (GlcNAc...) asparagine). A helical transmembrane segment spans residues 164 to 184 (SFFLILLGLGFVGGIGYIVYG). The Cytoplasmic segment spans residues 185–236 (KMPKQKKVRTVSKVNKNAVRVETEDETAEWLSGTSAASSKVKSVQKVVKKNK).

This sequence belongs to the TRAP-alpha family. In terms of assembly, heterotrimer of TRAP-alpha, TRAP-beta and TRAP-gamma. Post-translationally, phosphorylated in its cytoplasmic tail.

The protein resides in the endoplasmic reticulum membrane. In terms of biological role, TRAP proteins are part of a complex whose function is to bind calcium to the ER membrane and thereby regulate the retention of ER resident proteins. This Dictyostelium discoideum (Social amoeba) protein is Translocon-associated protein subunit alpha (ssr1).